The sequence spans 497 residues: Cytochrome P450 71A16 (497 aa).

A helical membrane pass occupies residues 1 to 21 (MEMMILISLCLTTFLTILLFF). Residue Cys439 coordinates heme.

It belongs to the cytochrome P450 family. Heme is required as a cofactor.

It is found in the membrane. In terms of biological role, possesses triterpene oxidizing activity. Catalyzes the C23 hydroxylation of marneral to form 23-hydroxymarneral. Catalyzes the C23 hydroxylation of marnerol to form 23-hydroxymarnerol. This Arabidopsis thaliana (Mouse-ear cress) protein is Cytochrome P450 71A16 (CYP71A16).